The following is a 156-amino-acid chain: Large ribosomal subunit protein uL11 (156 aa).

Positions methionine 1 to isoleucine 20 are disordered.

This sequence belongs to the universal ribosomal protein uL11 family. In terms of assembly, part of the ribosomal stalk of the 50S ribosomal subunit. Interacts with L10 and the large rRNA to form the base of the stalk. L10 forms an elongated spine to which L12 dimers bind in a sequential fashion forming a multimeric L10(L12)X complex.

In terms of biological role, forms part of the ribosomal stalk which helps the ribosome interact with GTP-bound translation factors. The protein is Large ribosomal subunit protein uL11 of Thermoplasma acidophilum (strain ATCC 25905 / DSM 1728 / JCM 9062 / NBRC 15155 / AMRC-C165).